Consider the following 450-residue polypeptide: Chromosomal replication initiator protein DnaA 2 (450 aa).

Residues 1–87 (MLTCNECTTW…LEFVVAEHKK (87 aa)) form a domain I, interacts with DnaA modulators region. The interval 87–114 (KPSAPVASQKESNEGISEVFEETKDFEL) is domain II. Residues 115–330 (KLNLSYRFDN…GAINKLTAYC (216 aa)) are domain III, AAA+ region. 4 residues coordinate ATP: Gly-159, Gly-161, Lys-162, and Thr-163. The domain IV, binds dsDNA stretch occupies residues 331 to 450 (RLFGKSLTET…VNLCKNHIVG (120 aa)).

The protein belongs to the DnaA family. In terms of assembly, oligomerizes as a right-handed, spiral filament on DNA at oriC.

It is found in the cytoplasm. Functionally, plays an essential role in the initiation and regulation of chromosomal replication. ATP-DnaA binds to the origin of replication (oriC) to initiate formation of the DNA replication initiation complex once per cell cycle. Binds the DnaA box (a 9 base pair repeat at the origin) and separates the double-stranded (ds)DNA. Forms a right-handed helical filament on oriC DNA; dsDNA binds to the exterior of the filament while single-stranded (ss)DNA is stabiized in the filament's interior. The ATP-DnaA-oriC complex binds and stabilizes one strand of the AT-rich DNA unwinding element (DUE), permitting loading of DNA polymerase. After initiation quickly degrades to an ADP-DnaA complex that is not apt for DNA replication. Binds acidic phospholipids. The sequence is that of Chromosomal replication initiator protein DnaA 2 from Chlamydia pneumoniae (Chlamydophila pneumoniae).